Consider the following 404-residue polypeptide: Multidrug resistance protein MdtH (404 aa).

Residues 1-12 lie on the Cytoplasmic side of the membrane; that stretch reads MSRVSQARNLGK. Residues 13 to 33 traverse the membrane as a helical segment; it reads YFLLIDNMLVVLGFFVVFPLI. Residues 34–98 are Periplasmic-facing; that stretch reads SIRFVDQMGW…GFATMGIAHE (65 aa). Residues 99–116 form a helical membrane-spanning segment; it reads PWLLWFSCFLSGLGGTLF. Over 117-138 the chain is Cytoplasmic; sequence DPPRSALVVKLIRPEQRGRFFS. Residues 139–159 traverse the membrane as a helical segment; sequence LLMMQDSAGAVIGALLGSWLL. At 160–164 the chain is on the periplasmic side; it reads QYDFR. The helical transmembrane segment at 165–185 threads the bilayer; that stretch reads LVCAMGAILFIVCAIFNAWLL. Over 186–213 the chain is Cytoplasmic; sequence PAWKLSTVRTPVREGMRRVISDKRFVTY. Residues 214-234 traverse the membrane as a helical segment; that stretch reads VLTLAGYYMLAVQVMLMLPIM. The Periplasmic segment spans residues 235–243; it reads VNDVAGSPA. Residues 244 to 264 form a helical membrane-spanning segment; sequence AVKWMYAIEACLSLTLLYPIA. Over 265 to 276 the chain is Cytoplasmic; the sequence is RWSEKRFRLEHR. A helical membrane pass occupies residues 277–297; sequence LMAGLLIMSLSMIPIGLAGNL. Residues 298 to 299 lie on the Periplasmic side of the membrane; that stretch reads QQ. A helical transmembrane segment spans residues 300–320; it reads LFTLICAFYIGSVIAEPARET. Topologically, residues 321-339 are cytoplasmic; sequence LSASLTDARARGSYMGFSR. A helical transmembrane segment spans residues 340-360; that stretch reads LGLAIGGAIGYIGGGWLFDMG. Topologically, residues 361–367 are periplasmic; it reads KTLAQPE. The chain crosses the membrane as a helical span at residues 368–388; the sequence is LPWMMLGIIGFITFLALGWQF. At 389–404 the chain is on the cytoplasmic side; it reads SHKRTPRQYTGARRLI.

This sequence belongs to the major facilitator superfamily. DHA1 family. MdtH (TC 2.A.1.2.21) subfamily.

It is found in the cell inner membrane. This Salmonella arizonae (strain ATCC BAA-731 / CDC346-86 / RSK2980) protein is Multidrug resistance protein MdtH.